A 308-amino-acid chain; its full sequence is MAESLMDIKRKIASTKKTGQITQAMQMVSGAKLSQIEKRAKKYQIYSDKVRQIVTHLAAGQLLELANAAESDTDSGDKSQVISVASLLQKRPVKKTGYLVITSDRGLVGSYNSTVLKAMMQMIKDDHESPDDYVMMAIGGVGADFFKARGLNLAYEYRGVSDIPTFNEVREIVKTAVTMFDNGVFDELYVCYNHHVNTLTSAFRAEKMLPISDLDVSEVADTNVEYLIEPDLDSVLESVLPQYAESLIFGAIMDAKTAEHAASTTAMRSATDNANDLISHLSTQYNRARQAAITTEITEIVGGAAALE.

The protein belongs to the ATPase gamma chain family. As to quaternary structure, F-type ATPases have 2 components, CF(1) - the catalytic core - and CF(0) - the membrane proton channel. CF(1) has five subunits: alpha(3), beta(3), gamma(1), delta(1), epsilon(1). CF(0) has three main subunits: a, b and c.

It is found in the cell membrane. In terms of biological role, produces ATP from ADP in the presence of a proton gradient across the membrane. The gamma chain is believed to be important in regulating ATPase activity and the flow of protons through the CF(0) complex. The sequence is that of ATP synthase gamma chain from Lacticaseibacillus casei (strain BL23) (Lactobacillus casei).